Reading from the N-terminus, the 109-residue chain is U4-lycotoxin-Ls1c (109 aa).

An N-terminal signal peptide occupies residues 1-22 (MKVLVLFSVLFLTLFSYSSTEA). Residues 23–44 (IDEFDSDAEDDMLSLMANEQVR) constitute a propeptide that is removed on maturation. The knottin domain stretch occupies residues 45 to 88 (AKACTPRLHDCSHDRHSCCRGELFKDVCYCFYPEGEDITEVCSC). Intrachain disulfides connect Cys48–Cys63, Cys55–Cys72, Cys62–Cys88, and Cys74–Cys86. A linear cationic cytotoxin domain region spans residues 89 to 108 (QQPKSHKYIEKVVDKAKTVV).

The protein belongs to the neurotoxin 19 (CSTX) family. 05 (U4-Lctx) subfamily. Expressed by the venom gland.

The protein resides in the secreted. Enhances the high-affinity desensitization of human P2RX3 purinoceptors. The polypeptide is U4-lycotoxin-Ls1c (Lycosa singoriensis (Wolf spider)).